The chain runs to 248 residues: Type III pantothenate kinase (248 aa).

6–13 (DIGNTETK) contributes to the ATP binding site. Residue 103-106 (GSDR) coordinates substrate. D105 functions as the Proton acceptor in the catalytic mechanism. A K(+)-binding site is contributed by D124. Residue T127 participates in ATP binding. Substrate is bound at residue T178.

The protein belongs to the type III pantothenate kinase family. Homodimer. NH4(+) serves as cofactor. Requires K(+) as cofactor.

Its subcellular location is the cytoplasm. The enzyme catalyses (R)-pantothenate + ATP = (R)-4'-phosphopantothenate + ADP + H(+). It functions in the pathway cofactor biosynthesis; coenzyme A biosynthesis; CoA from (R)-pantothenate: step 1/5. Functionally, catalyzes the phosphorylation of pantothenate (Pan), the first step in CoA biosynthesis. This chain is Type III pantothenate kinase, found in Pelagibacter ubique (strain HTCC1062).